The following is a 574-amino-acid chain: Sentrin-specific protease 3 (574 aa).

The tract at residues 1 to 125 (MKETIQGTGS…PTHRKTCSQR (125 aa)) is disordered. A phosphoserine mark is found at Ser54, Ser73, and Ser75. Residues 74-93 (ASEEEEEEEEEEDEDEEEEV) show a composition bias toward acidic residues. Over residues 112–125 (RPSRPTHRKTCSQR) the composition is skewed to basic residues. Short sequence motifs (nuclear localization signal) lie at residues 125–128 (RRRR) and 153–159 (RHRGRRR). A disordered region spans residues 161–181 (LAHPKNHLSPQQGGATPQVPS). Phosphoserine is present on Ser169. Position 176 is a phosphothreonine (Thr176). 4 positions are modified to phosphoserine: Ser181, Ser188, Ser212, and Ser232. The tract at residues 386 to 543 (HVLTMDDLGT…AFVLQYCKHL (158 aa)) is protease. Catalysis depends on residues His465 and Asp482. The active-site Nucleophile is Cys532.

This sequence belongs to the peptidase C48 family. As to quaternary structure, component of some MLL1/MLL complex, at least composed of the core components KMT2A/MLL1, ASH2L, HCFC1/HCF1, WDR5 and RBBP5, as well as the facultative components BACC1, CHD8, E2F6, HSP70, INO80C, KANSL1, LAS1L, MAX, MCRS1, MGA, MYST1/MOF, PELP1, PHF20, PRP31, RING2, RUVB1/TIP49A, RUVB2/TIP49B, SENP3, TAF1, TAF4, TAF6, TAF7, TAF9 and TEX10. Interacts with EP300, NPM1 and CDCA8. Component of the 5FMC complex, at least composed of PELP1, LAS1L, TEX10, WDR18 and SENP3; the complex interacts with methylated CHTOP and ZNF148. Interacts with NOL9. Interacts with CCAR2.

Its subcellular location is the nucleus. It localises to the nucleolus. It is found in the nucleoplasm. The protein resides in the cytoplasm. On oxidative stress, SENP3 degradation is blocked by inhibition of its ubiquitination, which stabilizes it as it accumulates in the nucleoplasm. Protease that releases SUMO2 and SUMO3 monomers from sumoylated substrates, but has only weak activity against SUMO1 conjugates. Deconjugates SUMO2 from MEF2D, which increases its transcriptional activation capability. Deconjugates SUMO2 and SUMO3 from CDCA8. Redox sensor that, when redistributed into nucleoplasm, can act as an effector to enhance HIF1A transcriptional activity by desumoylating EP300. Required for rRNA processing through deconjugation of SUMO2 and SUMO3 from nucleophosmin, NPM1. Plays a role in the regulation of sumoylation status of ZNF148. Functions as a component of the Five Friends of Methylated CHTOP (5FMC) complex; the 5FMC complex is recruited to ZNF148 by methylated CHTOP, leading to desumoylation of ZNF148 and subsequent transactivation of ZNF148 target genes. Deconjugates SUMO2 from KAT5. Catalyzes desumoylation of MRE11. In Homo sapiens (Human), this protein is Sentrin-specific protease 3.